A 373-amino-acid chain; its full sequence is tRNA (guanine(26)-N(2))-dimethyltransferase (373 aa).

The Trm1 methyltransferase domain occupies 2-365 (KIISEGETKL…AELSDLVVLI (364 aa)). S-adenosyl-L-methionine-binding residues include Arg35, Arg66, Asp86, Asp113, and Ala114.

This sequence belongs to the class I-like SAM-binding methyltransferase superfamily. Trm1 family.

The catalysed reaction is guanosine(26) in tRNA + 2 S-adenosyl-L-methionine = N(2)-dimethylguanosine(26) in tRNA + 2 S-adenosyl-L-homocysteine + 2 H(+). In terms of biological role, dimethylates a single guanine residue at position 26 of a number of tRNAs using S-adenosyl-L-methionine as donor of the methyl groups. This Methanococcus maripaludis (strain C6 / ATCC BAA-1332) protein is tRNA (guanine(26)-N(2))-dimethyltransferase.